The chain runs to 242 residues: Ribosomal RNA small subunit methyltransferase G (242 aa).

S-adenosyl-L-methionine is bound by residues G81, F86, 104-106 (DST), 132-133 (AE), and R151.

This sequence belongs to the methyltransferase superfamily. RNA methyltransferase RsmG family.

It is found in the cytoplasm. Its function is as follows. Specifically methylates the N7 position of a guanine in 16S rRNA. The sequence is that of Ribosomal RNA small subunit methyltransferase G from Synechococcus elongatus (strain ATCC 33912 / PCC 7942 / FACHB-805) (Anacystis nidulans R2).